The primary structure comprises 897 residues: uncharacterized protein (897 aa).

Disordered stretches follow at residues R25 to R89 and P106 to S168. 3 stretches are compositionally biased toward low complexity: residues S32–S44, S57–L68, and P106–S142. A Helicase ATP-binding domain is found at S263–K446. Position 276–283 (D276–T283) interacts with ATP. The DEAH box signature appears at D397 to H400. The RING-type zinc-finger motif lies at C606 to R655. The Helicase C-terminal domain occupies Q727–L890.

This sequence belongs to the SNF2/RAD54 helicase family.

The protein resides in the cytoplasm. It is found in the nucleus. This is an uncharacterized protein from Schizosaccharomyces pombe (strain 972 / ATCC 24843) (Fission yeast).